We begin with the raw amino-acid sequence, 475 residues long: RNA pseudouridine synthase 3, mitochondrial (475 aa).

A mitochondrion-targeting transit peptide spans 1-15 (MLCRRRRVGAAVRWL). Positions 40 to 74 (RLGKPKPGPRPRQLLSLPPFPGGGDGDPLPGRKAA) are disordered. Positions 90–160 (ADVPQEVVQA…GEIKKRYETI (71 aa)) constitute an S4 RNA-binding domain. Asp-230 is an active-site residue.

Belongs to the pseudouridine synthase RluA family.

The protein resides in the mitochondrion. It catalyses the reaction a uridine in RNA = a pseudouridine in RNA. The polypeptide is RNA pseudouridine synthase 3, mitochondrial (Oryza sativa subsp. japonica (Rice)).